Here is an 895-residue protein sequence, read N- to C-terminus: Plasma membrane ATPase 1 (895 aa).

Residues 1-53 are disordered; it reads MSATEPTNEKVDKIVSDDEDEDIDQLVADLQSNPGAGDEEEEEENDSSFKAVP. At 1-92 the chain is on the cytoplasmic side; it reads MSATEPTNEK…AEEQENLVLK (92 aa). Residues 7–16 are compositionally biased toward basic and acidic residues; sequence TNEKVDKIVS. The span at 37 to 46 shows a compositional bias: acidic residues; the sequence is GDEEEEEEND. A helical transmembrane segment spans residues 93–113; that stretch reads FVMFFVGPIQFVMEAAAVLAA. Residues 114–117 are Extracellular-facing; it reads GLED. A helical transmembrane segment spans residues 118–137; that stretch reads WVDFGVICALLLLNAFVGFI. At 138-268 the chain is on the cytoplasmic side; that stretch reads QEYQAGSIVD…GTGHFTEVLN (131 aa). The helical transmembrane segment at 269-290 threads the bilayer; that stretch reads GIGTTLLVFVIVTLLVVWVACF. At 291 to 301 the chain is on the extracellular side; sequence YRTVRIVPILR. Residues 302 to 324 traverse the membrane as a helical segment; that stretch reads YTLAITIIGVPVGLPAVVTTTMA. Residues 325–696 are Cytoplasmic-facing; the sequence is VGAAYLAKKQ…IAILNRSLDI (372 aa). The 4-aspartylphosphate intermediate role is filled by D355. The Mg(2+) site is built by D611 and D615. The helical transmembrane segment at 697 to 715 threads the bilayer; that stretch reads NLIVFIAIFADVATLAIAY. The Extracellular segment spans residues 716–731; the sequence is DNAPYDPKPVKWNLPR. A helical membrane pass occupies residues 732–751; it reads LWGMSIVLGIILAIGTWITL. The Cytoplasmic portion of the chain corresponds to 752-801; that stretch reads TTMLLPKGGIIQNFGGLDGILFLQISLTENWLIFVTRAQGPFWSSIPSWQ. Residues 802–822 form a helical membrane-spanning segment; sequence LSGAVLIVDIIATCFTLFGWW. Residues 823-834 are Extracellular-facing; sequence SQNWTDIVTVVR. A helical membrane pass occupies residues 835–851; sequence TWIWSFGVFCVMGGAYY. Residues 852–895 lie on the Cytoplasmic side of the membrane; that stretch reads LMSTSEAFDNFCNGRKPQQHTDKRSLEDFLVSMQRVSTQHEKST.

Belongs to the cation transport ATPase (P-type) (TC 3.A.3) family. Type IIIA subfamily.

The protein localises to the cell membrane. It carries out the reaction ATP + H2O + H(+)(in) = ADP + phosphate + 2 H(+)(out). Its function is as follows. The plasma membrane ATPase of plants and fungi is a hydrogen ion pump. The proton gradient it generates drives the active transport of nutrients by H(+)-symport. The resulting external acidification and/or internal alkinization may mediate growth responses. In Candida albicans (Yeast), this protein is Plasma membrane ATPase 1 (PMA1).